The primary structure comprises 512 residues: Ferrochelatase-2, chloroplastic (512 aa).

Residues 1-32 (MNCPAMTASPSSSSSSSYSTFRPPPPLLPQLS) form a disordered region. The N-terminal 83 residues, 1–83 (MNCPAMTASP…SNPLNISSSS (83 aa)), are a transit peptide targeting the chloroplast. A compositionally biased stretch (low complexity) spans 9–21 (SPSSSSSSSYSTF). Val-84 carries the post-translational modification N-acetylvaline.

Belongs to the ferrochelatase family. Expressed in leaves and flowers.

The protein resides in the plastid. It is found in the chloroplast membrane. Its subcellular location is the chloroplast thylakoid membrane. It catalyses the reaction heme b + 2 H(+) = protoporphyrin IX + Fe(2+). Its pathway is porphyrin-containing compound metabolism; protoheme biosynthesis; protoheme from protoporphyrin-IX: step 1/1. In terms of biological role, catalyzes the last step of heme biosynthesis by inserting ferrous iron into protoporphyrin IX to produce protoheme. Produces heme for photosynthetic cytochromes, and for proteins involved in abiotic and biotic stress responses. May play a role in the quality control of individual chloroplasts during photo-oxidative stress through regulation of heme biosynthesis. In Arabidopsis thaliana (Mouse-ear cress), this protein is Ferrochelatase-2, chloroplastic.